The primary structure comprises 248 residues: 2,3-bisphosphoglycerate-dependent phosphoglycerate mutase (248 aa).

Substrate is bound by residues 8–15, 21–22, Arg60, 87–90, Lys98, 114–115, and 183–184; these read RHGESVWN, TG, ERHY, RR, and GN. Catalysis depends on His9, which acts as the Tele-phosphohistidine intermediate. Glu87 serves as the catalytic Proton donor/acceptor.

Belongs to the phosphoglycerate mutase family. BPG-dependent PGAM subfamily.

It carries out the reaction (2R)-2-phosphoglycerate = (2R)-3-phosphoglycerate. It functions in the pathway carbohydrate degradation; glycolysis; pyruvate from D-glyceraldehyde 3-phosphate: step 3/5. Its function is as follows. Catalyzes the interconversion of 2-phosphoglycerate and 3-phosphoglycerate. This chain is 2,3-bisphosphoglycerate-dependent phosphoglycerate mutase, found in Brachyspira hyodysenteriae (strain ATCC 49526 / WA1).